The following is a 176-amino-acid chain: Sperm-egg fusion protein TMEM95 (176 aa).

Residues 1-16 form the signal peptide; the sequence is MWRLALGGVFLAAAQA. 4 cysteine pairs are disulfide-bonded: cysteine 17–cysteine 118, cysteine 20–cysteine 121, cysteine 105–cysteine 128, and cysteine 109–cysteine 134. The Extracellular segment spans residues 17-145; sequence CVFCRLPAHD…PGSQDLWEAK (129 aa). The helical transmembrane segment at 146 to 166 threads the bilayer; the sequence is ILLLSIFGAFLLLGVLSLLVE. The Cytoplasmic segment spans residues 167-176; sequence SHHLQAKSGL.

The protein belongs to the TMEM95 family. In terms of assembly, does not interact with sperm-egg fusion proteins IZUMO1 or IZUMO1R/JUNO. In terms of processing, N-glycosylated. In terms of tissue distribution, spermatozoa (at protein level).

It is found in the cytoplasmic vesicle. The protein resides in the secretory vesicle. The protein localises to the acrosome membrane. Functionally, sperm protein required for fusion of sperm with the egg membrane during fertilization. The polypeptide is Sperm-egg fusion protein TMEM95 (Homo sapiens (Human)).